Reading from the N-terminus, the 312-residue chain is Apulose-4-phosphate transketolase subunit B (312 aa).

The protein belongs to the transketolase family. In terms of assembly, probable heterodimer composed of AptA and AptB. It depends on thiamine diphosphate as a cofactor.

The enzyme catalyses apulose 4-phosphate + D-glyceraldehyde 3-phosphate = D-xylulose 5-phosphate + dihydroxyacetone phosphate. It functions in the pathway carbohydrate metabolism. Functionally, involved in catabolism of D-apiose. Catalyzes the transfer of the glycolaldehyde group from apulose-4-phosphate to D-glyceraldehyde 3-phosphate, generating dihydroxyacetone phosphate and D-xylulose-5-phosphate. This chain is Apulose-4-phosphate transketolase subunit B, found in Phocaeicola vulgatus (strain ATCC 8482 / DSM 1447 / JCM 5826 / CCUG 4940 / NBRC 14291 / NCTC 11154) (Bacteroides vulgatus).